We begin with the raw amino-acid sequence, 793 residues long: DNA mismatch repair protein MutS (793 aa).

Residue 589 to 596 (GPNMSGKS) coordinates ATP.

Belongs to the DNA mismatch repair MutS family.

In terms of biological role, this protein is involved in the repair of mismatches in DNA. It is possible that it carries out the mismatch recognition step. This protein has a weak ATPase activity. This chain is DNA mismatch repair protein MutS, found in Thermotoga petrophila (strain ATCC BAA-488 / DSM 13995 / JCM 10881 / RKU-1).